Reading from the N-terminus, the 434-residue chain is Putative magnesium transporter MRS2-D (434 aa).

2 disordered regions span residues 126–171 (AASP…DGEA) and 279–311 (EASELEDHSSRDEEGVEGGGGGDGDDETIAGGG). A compositionally biased stretch (basic and acidic residues) spans 279 to 291 (EASELEDHSSRDE). The next 2 membrane-spanning stretches (helical) occupy residues 367–387 (GILLSTGTLVSSCAIAVTGVF) and 405–425 (FPCAAAGIVAGSLALYLAALL).

It belongs to the CorA metal ion transporter (MIT) (TC 1.A.35.5) family.

Its subcellular location is the membrane. Its function is as follows. Putative magnesium transporter. This is Putative magnesium transporter MRS2-D (MRS2-D) from Oryza sativa subsp. japonica (Rice).